A 141-amino-acid polypeptide reads, in one-letter code: MAIERTLSIIKPDAVAKNVIGQIYARFEAAGLKIVAAKMVHLSRGEAEQFYAVHKERPFFKDLVDFMVSGPVMIQALEGENAIAKNRDLMGATDPKKAEKGTIRADFADSIDANAVHGSDAAETAAVEVSFFFPGMNVYSR.

Residues Lys11, Phe59, Arg87, Thr93, Arg104, and Asn114 each contribute to the ATP site. The Pros-phosphohistidine intermediate role is filled by His117.

This sequence belongs to the NDK family. In terms of assembly, homotetramer. Requires Mg(2+) as cofactor.

The protein localises to the cytoplasm. The catalysed reaction is a 2'-deoxyribonucleoside 5'-diphosphate + ATP = a 2'-deoxyribonucleoside 5'-triphosphate + ADP. It catalyses the reaction a ribonucleoside 5'-diphosphate + ATP = a ribonucleoside 5'-triphosphate + ADP. Its function is as follows. Major role in the synthesis of nucleoside triphosphates other than ATP. The ATP gamma phosphate is transferred to the NDP beta phosphate via a ping-pong mechanism, using a phosphorylated active-site intermediate. The polypeptide is Nucleoside diphosphate kinase (Cupriavidus necator (strain ATCC 17699 / DSM 428 / KCTC 22496 / NCIMB 10442 / H16 / Stanier 337) (Ralstonia eutropha)).